The primary structure comprises 130 residues: Histone H2A type 1-K (130 aa).

The disordered stretch occupies residues 1 to 22; that stretch reads MSGRGKQGGKARAKAKTRSSRA. The residue at position 2 (S2) is an N-acetylserine. S2 bears the Phosphoserine; by RPS6KA5 mark. Citrulline; alternate is present on R4. R4 is modified (symmetric dimethylarginine; by PRMT5; alternate). N6-(2-hydroxyisobutyryl)lysine; alternate is present on residues K6 and K10. Residue K6 is modified to N6-(beta-hydroxybutyryl)lysine; alternate. Residues K6 and K10 each carry the N6-acetyllysine; alternate modification. Residues 7–19 show a composition bias toward basic residues; it reads QGGKARAKAKTRS. N6-lactoyllysine; alternate is present on K10. K10 carries the post-translational modification N6-succinyllysine; alternate. Glycyl lysine isopeptide (Lys-Gly) (interchain with G-Cter in ubiquitin) cross-links involve residues K14 and K16. The residue at position 37 (K37) is an N6-(2-hydroxyisobutyryl)lysine; alternate. N6-(beta-hydroxybutyryl)lysine; alternate is present on K37. N6-crotonyllysine; alternate is present on K37. N6-(2-hydroxyisobutyryl)lysine occurs at positions 75 and 76. An N6-(2-hydroxyisobutyryl)lysine; alternate modification is found at K96. K96 is subject to N6-succinyllysine; alternate. N6-glutaryllysine; alternate is present on K96. Q105 is modified (N5-methylglutamine). K119 carries the N6-(2-hydroxyisobutyryl)lysine; alternate modification. N6-crotonyllysine; alternate occurs at positions 119 and 120. Residues K119 and K120 each carry the N6-glutaryllysine; alternate modification. Position 120 is an N6-(beta-hydroxybutyryl)lysine; alternate (K120). K120 participates in a covalent cross-link: Glycyl lysine isopeptide (Lys-Gly) (interchain with G-Cter in ubiquitin); alternate. Residue T121 is modified to Phosphothreonine; by DCAF1. Position 126 is an N6-(beta-hydroxybutyryl)lysine; alternate (K126). Residue K126 is modified to N6-crotonyllysine; alternate. An N6-glutaryllysine; alternate modification is found at K126.

This sequence belongs to the histone H2A family. The nucleosome is a histone octamer containing two molecules each of H2A, H2B, H3 and H4 assembled in one H3-H4 heterotetramer and two H2A-H2B heterodimers. The octamer wraps approximately 147 bp of DNA. In terms of processing, deiminated on Arg-4 in granulocytes upon calcium entry. Monoubiquitination of Lys-120 (H2AK119Ub) by RING1, TRIM37 and RNF2/RING2 complex gives a specific tag for epigenetic transcriptional repression and participates in X chromosome inactivation of female mammals. It is involved in the initiation of both imprinted and random X inactivation. Ubiquitinated H2A is enriched in inactive X chromosome chromatin. Ubiquitination of H2A functions downstream of methylation of 'Lys-27' of histone H3 (H3K27me). H2AK119Ub by RNF2/RING2 can also be induced by ultraviolet and may be involved in DNA repair. Following DNA double-strand breaks (DSBs), it is ubiquitinated through 'Lys-63' linkage of ubiquitin moieties by the E2 ligase UBE2N and the E3 ligases RNF8 and RNF168, leading to the recruitment of repair proteins to sites of DNA damage. Ubiquitination at Lys-14 and Lys-16 (H2AK13Ub and H2AK15Ub, respectively) in response to DNA damage is initiated by RNF168 that mediates monoubiquitination at these 2 sites, and 'Lys-63'-linked ubiquitin are then conjugated to monoubiquitin; RNF8 is able to extend 'Lys-63'-linked ubiquitin chains in vitro. Deubiquitinated by USP51 at Lys-14 and Lys-16 (H2AK13Ub and H2AK15Ub, respectively) after damaged DNA is repaired. H2AK119Ub and ionizing radiation-induced 'Lys-63'-linked ubiquitination (H2AK13Ub and H2AK15Ub) are distinct events. Post-translationally, phosphorylation on Ser-2 (H2AS1ph) is enhanced during mitosis. Phosphorylation on Ser-2 by RPS6KA5/MSK1 directly represses transcription. Acetylation of H3 inhibits Ser-2 phosphorylation by RPS6KA5/MSK1. Phosphorylation at Thr-121 (H2AT120ph) by DCAF1 is present in the regulatory region of many tumor suppresor genes and down-regulates their transcription. In terms of processing, symmetric dimethylation on Arg-4 by the PRDM1/PRMT5 complex may play a crucial role in the germ-cell lineage. Glutamine methylation at Gln-105 (H2AQ104me) by FBL is specifically dedicated to polymerase I. It is present at 35S ribosomal DNA locus and impairs binding of the FACT complex. Post-translationally, crotonylation (Kcr) is specifically present in male germ cells and marks testis-specific genes in post-meiotic cells, including X-linked genes that escape sex chromosome inactivation in haploid cells. Crotonylation marks active promoters and enhancers and confers resistance to transcriptional repressors. It is also associated with post-meiotically activated genes on autosomes. In terms of processing, hydroxybutyrylation of histones is induced by starvation. Lactylated in macrophages by EP300/P300 by using lactoyl-CoA directly derived from endogenous or exogenous lactate, leading to stimulates gene transcription.

Its subcellular location is the nucleus. The protein localises to the chromosome. Its function is as follows. Core component of nucleosome. Nucleosomes wrap and compact DNA into chromatin, limiting DNA accessibility to the cellular machineries which require DNA as a template. Histones thereby play a central role in transcription regulation, DNA repair, DNA replication and chromosomal stability. DNA accessibility is regulated via a complex set of post-translational modifications of histones, also called histone code, and nucleosome remodeling. The sequence is that of Histone H2A type 1-K from Mus musculus (Mouse).